Here is a 259-residue protein sequence, read N- to C-terminus: Sesquipedalian-2 (259 aa).

The PH domain maps to 17–121 (PADHMGFLRT…WVKVLSRASF (105 aa)). Positions 124 to 149 (MRLVVRELESQLQDARQSLALQRRSS) form a coiled coil. Positions 223–235 (CFSTLHDWYGQEI) match the F&amp;H motif.

The protein belongs to the sesquipedalian family. As to quaternary structure, forms homodimers and heterodimers with PHETA1. Interacts with OCRL and INPP5B.

Its subcellular location is the early endosome. The protein resides in the recycling endosome. It localises to the golgi apparatus. It is found in the trans-Golgi network. The protein localises to the cytoplasmic vesicle. Its subcellular location is the clathrin-coated vesicle. Functionally, plays a role in endocytic trafficking. Required for receptor recycling from endosomes, both to the trans-Golgi network and the plasma membrane. The sequence is that of Sesquipedalian-2 from Homo sapiens (Human).